We begin with the raw amino-acid sequence, 715 residues long: Eosinophil peroxidase (715 aa).

A signal peptide spans 1 to 17 (MHLLPALAGVLATLVLA). The propeptide occupies 18-139 (QPCEGTDPAS…SGCALRDQAE (122 aa)). 2 N-linked (GlcNAc...) asparagine glycosylation sites follow: Asn52 and Asn113. Cys141 and Cys152 form a disulfide bridge. Asp232 serves as a coordination point for heme b. Catalysis depends on His233, which acts as the Proton acceptor. Residue Asp234 participates in Ca(2+) binding. 2 cysteine pairs are disulfide-bonded: Cys253/Cys263 and Cys257/Cys281. Residues Thr306, Phe308, Asp310, and Ser312 each coordinate Ca(2+). Asn327 and Asn363 each carry an N-linked (GlcNAc...) asparagine glycan. Cys359 and Cys370 are oxidised to a cystine. Positions 380 and 474 each coordinate heme b. Tyr488 is subject to 3'-nitrotyrosine. 2 cysteine pairs are disulfide-bonded: Cys578-Cys635 and Cys676-Cys701. Residues Asn700 and Asn708 are each glycosylated (N-linked (GlcNAc...) asparagine).

Belongs to the peroxidase family. XPO subfamily. In terms of assembly, tetramer of two light chains and two heavy chains. Ca(2+) serves as cofactor. It depends on heme b as a cofactor.

It is found in the cytoplasmic granule. The enzyme catalyses 2 a phenolic donor + H2O2 = 2 a phenolic radical donor + 2 H2O. In terms of biological role, mediates tyrosine nitration of secondary granule proteins in mature resting eosinophils. Shows significant inhibitory activity towards Mycobacterium tuberculosis H37Rv by inducing bacterial fragmentation and lysis. The sequence is that of Eosinophil peroxidase (EPX) from Homo sapiens (Human).